The chain runs to 563 residues: Sulfite reductase [NADPH] hemoprotein beta-component (563 aa).

[4Fe-4S] cluster is bound by residues C426, C432, C472, and C476. C476 is a binding site for siroheme.

This sequence belongs to the nitrite and sulfite reductase 4Fe-4S domain family. As to quaternary structure, alpha(8)-beta(8). The alpha component is a flavoprotein, the beta component is a hemoprotein. Siroheme is required as a cofactor. Requires [4Fe-4S] cluster as cofactor.

The enzyme catalyses hydrogen sulfide + 3 NADP(+) + 3 H2O = sulfite + 3 NADPH + 4 H(+). The protein operates within sulfur metabolism; hydrogen sulfide biosynthesis; hydrogen sulfide from sulfite (NADPH route): step 1/1. Functionally, component of the sulfite reductase complex that catalyzes the 6-electron reduction of sulfite to sulfide. This is one of several activities required for the biosynthesis of L-cysteine from sulfate. This chain is Sulfite reductase [NADPH] hemoprotein beta-component, found in Photobacterium profundum (strain SS9).